The sequence spans 630 residues: Plastin-3 (630 aa).

EF-hand domains lie at 12–47 (DELD…ANMP) and 52–87 (KVRE…VKSS). Residues Asp25, Asn27, Asn29, Glu36, Asp65, Asn67, Asp69, Lys71, and Glu76 each coordinate Ca(2+). Actin-binding stretches follow at residues 109 to 382 (TSEL…ALTK) and 383 to 627 (PENQ…GRGM). 2 Calponin-homology (CH) domains span residues 123–239 (EEEK…KIGL) and 267–378 (LSPE…NKYP). Phosphoserine occurs at positions 268, 293, 326, and 339. Thr391 is subject to Phosphothreonine. Calponin-homology (CH) domains are found at residues 397–506 (TREE…RRYT) and 518–627 (KAND…GRGM).

In terms of assembly, monomer. Expressed in a variety of organs, including muscle, brain, uterus and esophagus.

It localises to the cytoplasm. Its function is as follows. Actin-bundling protein. This chain is Plastin-3 (PLS3), found in Homo sapiens (Human).